Reading from the N-terminus, the 314-residue chain is Glycerol-1-phosphate dehydrogenase [NAD(P)+] (314 aa).

NAD(+) is bound by residues 52–56 and 74–77; these read GKPLD and TSAS. Asp-79 provides a ligand contact to substrate. Ser-83 is an NAD(+) binding site. Asp-131 is a binding site for substrate. Zn(2+)-binding residues include Asp-131 and His-211. His-215 contributes to the substrate binding site. A Zn(2+)-binding site is contributed by His-231.

This sequence belongs to the glycerol-1-phosphate dehydrogenase family. The cofactor is Zn(2+).

Its subcellular location is the cytoplasm. It catalyses the reaction sn-glycerol 1-phosphate + NAD(+) = dihydroxyacetone phosphate + NADH + H(+). The enzyme catalyses sn-glycerol 1-phosphate + NADP(+) = dihydroxyacetone phosphate + NADPH + H(+). The protein operates within membrane lipid metabolism; glycerophospholipid metabolism. Catalyzes the NAD(P)H-dependent reduction of dihydroxyacetonephosphate (DHAP or glycerone phosphate) to glycerol 1-phosphate (G1P). The G1P thus generated is used as the glycerophosphate backbone of phospholipids in the cellular membranes of Archaea. In Korarchaeum cryptofilum (strain OPF8), this protein is Glycerol-1-phosphate dehydrogenase [NAD(P)+].